Here is a 377-residue protein sequence, read N- to C-terminus: Succinyl-diaminopimelate desuccinylase (377 aa).

A Zn(2+)-binding site is contributed by His-67. Residue Asp-69 is part of the active site. Residue Asp-100 coordinates Zn(2+). Glu-134 functions as the Proton acceptor in the catalytic mechanism. Glu-135, Glu-163, and His-349 together coordinate Zn(2+).

Belongs to the peptidase M20A family. DapE subfamily. In terms of assembly, homodimer. The cofactor is Zn(2+). It depends on Co(2+) as a cofactor.

The enzyme catalyses N-succinyl-(2S,6S)-2,6-diaminopimelate + H2O = (2S,6S)-2,6-diaminopimelate + succinate. It functions in the pathway amino-acid biosynthesis; L-lysine biosynthesis via DAP pathway; LL-2,6-diaminopimelate from (S)-tetrahydrodipicolinate (succinylase route): step 3/3. Catalyzes the hydrolysis of N-succinyl-L,L-diaminopimelic acid (SDAP), forming succinate and LL-2,6-diaminopimelate (DAP), an intermediate involved in the bacterial biosynthesis of lysine and meso-diaminopimelic acid, an essential component of bacterial cell walls. This Haemophilus influenzae (strain PittEE) protein is Succinyl-diaminopimelate desuccinylase.